A 119-amino-acid polypeptide reads, in one-letter code: Large ribosomal subunit protein bL20 (119 aa).

The protein belongs to the bacterial ribosomal protein bL20 family.

Binds directly to 23S ribosomal RNA and is necessary for the in vitro assembly process of the 50S ribosomal subunit. It is not involved in the protein synthesizing functions of that subunit. This chain is Large ribosomal subunit protein bL20, found in Levilactobacillus brevis (strain ATCC 367 / BCRC 12310 / CIP 105137 / JCM 1170 / LMG 11437 / NCIMB 947 / NCTC 947) (Lactobacillus brevis).